A 191-amino-acid chain; its full sequence is Cdc42 homolog (191 aa).

Residue 10–17 participates in GTP binding; that stretch reads GDGAVGKT. Residues 32-40 carry the Effector region motif; that stretch reads YVPTVFDNY. Residues 57–61 and 115–118 contribute to the GTP site; these read DTAGQ and TQID. Cys-188 is modified (cysteine methyl ester). A lipid anchor (S-geranylgeranyl cysteine) is attached at Cys-188. The propeptide at 189 to 191 is removed in mature form; that stretch reads KFL.

It belongs to the small GTPase superfamily. Rho family. CDC42 subfamily.

The protein resides in the cell junction. It localises to the adherens junction. The protein localises to the cell membrane. Its function is as follows. Regulates mbt kinase activity and is also required to recruit mbt to adherens junctions. Together with mbt, regulates photoreceptor cell morphogenesis. This chain is Cdc42 homolog, found in Aedes aegypti (Yellowfever mosquito).